Consider the following 369-residue polypeptide: 4-hydroxy-3-methylbut-2-en-1-yl diphosphate synthase (flavodoxin) (369 aa).

4 residues coordinate [4Fe-4S] cluster: Cys-270, Cys-273, Cys-305, and Glu-312.

The protein belongs to the IspG family. Requires [4Fe-4S] cluster as cofactor.

The enzyme catalyses (2E)-4-hydroxy-3-methylbut-2-enyl diphosphate + oxidized [flavodoxin] + H2O + 2 H(+) = 2-C-methyl-D-erythritol 2,4-cyclic diphosphate + reduced [flavodoxin]. The protein operates within isoprenoid biosynthesis; isopentenyl diphosphate biosynthesis via DXP pathway; isopentenyl diphosphate from 1-deoxy-D-xylulose 5-phosphate: step 5/6. In terms of biological role, converts 2C-methyl-D-erythritol 2,4-cyclodiphosphate (ME-2,4cPP) into 1-hydroxy-2-methyl-2-(E)-butenyl 4-diphosphate. This is 4-hydroxy-3-methylbut-2-en-1-yl diphosphate synthase (flavodoxin) from Psychromonas ingrahamii (strain DSM 17664 / CCUG 51855 / 37).